Reading from the N-terminus, the 788-residue chain is Cadherin-related family member 4 (788 aa).

Positions 1–16 (MVLLRLLVFLFAPVVS) are cleaved as a signal peptide. The Extracellular portion of the chain corresponds to 17 to 686 (DLCSLPCFIN…DTEAFWQPQP (670 aa)). 4 consecutive Cadherin domains span residues 237–338 (LEQA…PPRC), 339–449 (LPAL…APRT), 444–554 (ACAP…EPPF), and 551–674 (EPPF…TPML). N-linked (GlcNAc...) asparagine glycosylation is present at N242. The chain crosses the membrane as a helical span at residues 687–707 (WFVVVLTATGALLLLALGWLL). Topologically, residues 708–788 (GRLLQGLAQL…NTHTGARRWL (81 aa)) are cytoplasmic.

The protein localises to the membrane. Its function is as follows. Cadherins are calcium-dependent cell adhesion proteins. They preferentially interact with themselves in a homophilic manner in connecting cells; cadherins may thus contribute to the sorting of heterogeneous cell types. The protein is Cadherin-related family member 4 (CDHR4) of Homo sapiens (Human).